A 264-amino-acid chain; its full sequence is 3-methyl-2-oxobutanoate hydroxymethyltransferase (264 aa).

Mg(2+) contacts are provided by Asp45 and Asp84. Residues 45–46 (DS), Asp84, and Lys112 contribute to the 3-methyl-2-oxobutanoate site. Mg(2+) is bound at residue Glu114. The Proton acceptor role is filled by Glu181.

This sequence belongs to the PanB family. In terms of assembly, homodecamer; pentamer of dimers. The cofactor is Mg(2+).

It is found in the cytoplasm. It carries out the reaction 3-methyl-2-oxobutanoate + (6R)-5,10-methylene-5,6,7,8-tetrahydrofolate + H2O = 2-dehydropantoate + (6S)-5,6,7,8-tetrahydrofolate. The protein operates within cofactor biosynthesis; (R)-pantothenate biosynthesis; (R)-pantoate from 3-methyl-2-oxobutanoate: step 1/2. Functionally, catalyzes the reversible reaction in which hydroxymethyl group from 5,10-methylenetetrahydrofolate is transferred onto alpha-ketoisovalerate to form ketopantoate. In Escherichia coli O127:H6 (strain E2348/69 / EPEC), this protein is 3-methyl-2-oxobutanoate hydroxymethyltransferase.